The sequence spans 209 residues: 7-carboxy-7-deazaguanine synthase (209 aa).

Substrate is bound by residues isoleucine 10 to glycine 12 and arginine 25. Residues tyrosine 16–aspartate 205 enclose the Radical SAM core domain. [4Fe-4S] cluster is bound by residues cysteine 29, cysteine 33, and cysteine 36. Threonine 38 is a binding site for Mg(2+). Threonine 68 serves as a coordination point for substrate. Position 70 (glycine 70) interacts with S-adenosyl-L-methionine.

The protein belongs to the radical SAM superfamily. 7-carboxy-7-deazaguanine synthase family. As to quaternary structure, homodimer. It depends on [4Fe-4S] cluster as a cofactor. The cofactor is S-adenosyl-L-methionine. Mg(2+) is required as a cofactor.

The enzyme catalyses 6-carboxy-5,6,7,8-tetrahydropterin + H(+) = 7-carboxy-7-deazaguanine + NH4(+). The protein operates within purine metabolism; 7-cyano-7-deazaguanine biosynthesis. In terms of biological role, catalyzes the complex heterocyclic radical-mediated conversion of 6-carboxy-5,6,7,8-tetrahydropterin (CPH4) to 7-carboxy-7-deazaguanine (CDG), a step common to the biosynthetic pathways of all 7-deazapurine-containing compounds. The chain is 7-carboxy-7-deazaguanine synthase from Thermoplasma acidophilum (strain ATCC 25905 / DSM 1728 / JCM 9062 / NBRC 15155 / AMRC-C165).